Consider the following 314-residue polypeptide: Protoheme IX farnesyltransferase (314 aa).

The next 7 membrane-spanning stretches (helical) occupy residues 58–78 (LWLV…ASVF), 107–127 (AALV…YVWV), 130–150 (LSAA…TMLL), 173–193 (WTAV…VVFF), 227–247 (VGRQ…LLWP), 248–268 (VAGT…VFLL), and 294–314 (SSNL…LLAG).

The protein belongs to the UbiA prenyltransferase family. Protoheme IX farnesyltransferase subfamily.

The protein localises to the cell membrane. It carries out the reaction heme b + (2E,6E)-farnesyl diphosphate + H2O = Fe(II)-heme o + diphosphate. Its pathway is porphyrin-containing compound metabolism; heme O biosynthesis; heme O from protoheme: step 1/1. Functionally, converts heme B (protoheme IX) to heme O by substitution of the vinyl group on carbon 2 of heme B porphyrin ring with a hydroxyethyl farnesyl side group. The chain is Protoheme IX farnesyltransferase from Nocardioides sp. (strain ATCC BAA-499 / JS614).